Here is a 341-residue protein sequence, read N- to C-terminus: Formimidoylglutamase (341 aa).

Residues His-133, Asp-162, His-164, Asp-166, Cys-253, and Asp-255 each coordinate Mn(2+).

The protein belongs to the arginase family. The cofactor is Mn(2+).

It catalyses the reaction N-formimidoyl-L-glutamate + H2O = formamide + L-glutamate. The protein operates within amino-acid degradation; L-histidine degradation into L-glutamate; L-glutamate from N-formimidoyl-L-glutamate (hydrolase route): step 1/1. In terms of biological role, catalyzes the conversion of N-formimidoyl-L-glutamate to L-glutamate and formamide. This is Formimidoylglutamase from Aromatoleum aromaticum (strain DSM 19018 / LMG 30748 / EbN1) (Azoarcus sp. (strain EbN1)).